A 199-amino-acid chain; its full sequence is Thymidine kinase (199 aa).

Residues 15-22 (GSMFSGKS) and 88-91 (DEVQ) each bind ATP. The active-site Proton acceptor is E89. Positions 145, 148, 183, and 186 each coordinate Zn(2+).

This sequence belongs to the thymidine kinase family. Homotetramer.

Its subcellular location is the cytoplasm. The catalysed reaction is thymidine + ATP = dTMP + ADP + H(+). The protein is Thymidine kinase of Staphylococcus epidermidis (strain ATCC 12228 / FDA PCI 1200).